The sequence spans 731 residues: Unconventional prefoldin RPB5 interactor-like protein (731 aa).

Coiled coils occupy residues 91–115 (RLKLAEEQLKKLAVENDLWQKKLHT) and 143–176 (LAEHRKRMRQQKQKERLEREAEPVKKDNEVLRKL). Residues 205–217 (PLKSTNESSPKSL) show a composition bias toward polar residues. Disordered regions lie at residues 205–224 (PLKSTNESSPKSLTQEEEDE), 259–302 (MSGE…EEEV), and 370–396 (ASEEEEEVVENNHLPDEPSKELSTVSE). A coiled-coil region spans residues 220-258 (EEEDELWKKLEAEEQNEADELSSEAEESLKTTDNLVRQL). Residues 285-300 (ISEDDGDDDDEGDQEE) show a composition bias toward acidic residues. Coiled coils occupy residues 357–379 (DDLQDLVFEQELEASEEEEEVVE) and 452–477 (SIKTKRQTTQDILQKVERNIEFVKEN). Polar residues-rich tracts occupy residues 508 to 518 (GAIPSPSSDQS) and 575 to 599 (SQFSKPNSSEICFTHSGSITPTSND). Disordered regions lie at residues 508–527 (GAIPSPSSDQSDGIPGKPSD), 567–682 (GSAY…DLRD), and 694–731 (VEKEPTAPEPLPPGKFIDSHAPKKRVSRFKEQRALNKT). Positions 611–621 (FYEKYEKDRAK) are enriched in basic and acidic residues. A compositionally biased stretch (polar residues) spans 623-644 (SKSNSSEGDATDPESATKSILR). Basic residues predominate over residues 661–673 (KKGRKVRNQKKKE). Residues 721 to 731 (RFKEQRALNKT) are compositionally biased toward basic and acidic residues.

Belongs to the RNA polymerase II subunit 5-mediating protein family. Interacts with serine/threonine-protein phosphatases flw/PP1beta9C and Pp1-87B with higher affinity for Pp1-87B.

It is found in the cytoplasm. It localises to the chromosome. Its subcellular location is the nucleus. Functionally, inhibits the activity of serine/threonine-protein phosphatases flw/PP1beta9C and Pp1-87B. Required for germ line cell viability and differentiation, normal transcriptional activity and maintenance of DNA integrity. The chain is Unconventional prefoldin RPB5 interactor-like protein from Drosophila melanogaster (Fruit fly).